The primary structure comprises 685 residues: Multicopper oxidase VdtB (685 aa).

Positions 1–17 (MPAYLLLLACNVLLVLG) are cleaved as a signal peptide. 2 consecutive Plastocyanin-like domains span residues 26 to 139 (LTWE…IRRK) and 168 to 368 (IMML…RYKN). Asparagine 71 carries N-linked (GlcNAc...) asparagine glycosylation. Positions 75, 77, 119, and 121 each coordinate Cu cation. N-linked (GlcNAc...) asparagine glycosylation is found at asparagine 178, asparagine 229, asparagine 253, asparagine 432, and asparagine 475. Residues 466–585 (DDDLIIRTQN…DNGMAMAILD (120 aa)) enclose the Plastocyanin-like 3 domain. A Cu cation-binding site is contributed by histidine 500. An N-linked (GlcNAc...) asparagine glycan is attached at asparagine 517. A helical membrane pass occupies residues 627–647 (SLVWAGGAAVVLLSLFIGGLW).

It belongs to the multicopper oxidase family.

It is found in the membrane. The catalysed reaction is 4 semiviriditoxin + O2 = 2 (M)-viriditoxin + 2 H2O. It functions in the pathway secondary metabolite biosynthesis. Its function is as follows. Multicopper oxidase; part of the gene cluster that mediates the biosynthesis of viriditoxin, one of the 'classical' secondary metabolites produced by fungi and that has antibacterial activity. The first step is performed by the polyketide synthase VdtA which condenses one acetyl-CoA and 6 malonyl-CoA units to form the heptaketide monomer backbone of viriditoxin. The product of VdtA is then O-methylated on C7 by the O-methyltransferase VdtC. The O-methyl group is important for the stereoselective coupling of the monomers at the final step of viriditoxin biosynthesis. The short-chain dehydrogenase/reductase VdtF then acts as a stereospecific reductase converting the pyrone to dihydropyrone via the reduction of the C3-C4 double bond. The FAD-binding monooxygenase VdtE then converts the ketone group into a methyl-ester group to yield semi-viriditoxin. Finally, the laccase VdtB is involved in dimerization of 2 semi-viriditoxin molecules to yield the final viriditoxin. VdtB is responsible for the regioselective 6,6'-coupling of semi-viriditoxin, which yields (M)-viriditoxin and (P)-viriditoxin at a ratio of 1:2. The non-catalytic carboxylesterase-like protein VdtD affects the stereochemistical outcome of the coupling. The highly reducing polyketide synthase VdtX is not involved in viriditoxin synthesis, but might possibly play a role in the production of additional metabolites not identified yet. In Byssochlamys spectabilis (Paecilomyces variotii), this protein is Multicopper oxidase VdtB.